The chain runs to 336 residues: MSAPLRVLVTGAAGQIGYSIVIRIADGTVFGKEQPVELVLLDVPQCSNILEGVVFELQDCALPTLFSVVAVTDEKSAFTGIDYAFLVGAMPRREGMERKDLLAANVKIFKSQGKALAEYAKPTTKVIVVGNPANTNAFIAAKYAAGKIPAKNFSAMTRLDHNRALAQLALKTGTTIGNVKNVIIWGNHSGTQFPDVTHATVNKNGTETDAYAAVGDNAFLQGPFIATVQKRGGVIIEKRKLSSAMSAAKAACDHIHDWHFGTKAGQFVSMAVPSDGSYGIPQGLIFSFPVTIEGGEWKIVQGLSFDDFAKGKIAATTKELEEERDDALKACDDANI.

NAD(+)-binding positions include 11-17 and D42; that span reads GAAGQIG. Substrate is bound by residues R92 and R98. NAD(+)-binding positions include N105, Q112, and 129–131; that span reads VGN. Substrate contacts are provided by N131 and R163. The active-site Proton acceptor is the H188.

This sequence belongs to the LDH/MDH superfamily. MDH type 2 family. As to quaternary structure, homodimer.

The protein localises to the cytoplasm. It carries out the reaction (S)-malate + NAD(+) = oxaloacetate + NADH + H(+). Catalyzes the reversible conversion of (S)-malate to oxaloacetate in the cytoplasm where oxaloacetate is used for gluconeogenesis. The polypeptide is Malate dehydrogenase, cytoplasmic (Caenorhabditis elegans).